We begin with the raw amino-acid sequence, 131 residues long: Small ribosomal subunit protein uS8 (131 aa).

This sequence belongs to the universal ribosomal protein uS8 family. Part of the 30S ribosomal subunit. Contacts proteins S5 and S12.

In terms of biological role, one of the primary rRNA binding proteins, it binds directly to 16S rRNA central domain where it helps coordinate assembly of the platform of the 30S subunit. This Hamiltonella defensa subsp. Acyrthosiphon pisum (strain 5AT) protein is Small ribosomal subunit protein uS8.